The chain runs to 827 residues: Glycerol-3-phosphate acyltransferase (827 aa).

Positions 325–330 match the HXXXXD motif motif; sequence CHRSHM.

The protein belongs to the GPAT/DAPAT family.

Its subcellular location is the cell inner membrane. The enzyme catalyses sn-glycerol 3-phosphate + an acyl-CoA = a 1-acyl-sn-glycero-3-phosphate + CoA. It functions in the pathway phospholipid metabolism; CDP-diacylglycerol biosynthesis; CDP-diacylglycerol from sn-glycerol 3-phosphate: step 1/3. The sequence is that of Glycerol-3-phosphate acyltransferase from Shigella flexneri serotype 5b (strain 8401).